Consider the following 284-residue polypeptide: Large ribosomal subunit protein uL2 (284 aa).

Disordered stretches follow at residues 28 to 50 (ELEG…FKKS) and 232 to 284 (RGTA…DRRK). Positions 36–46 (RSVRPNKKLSF) are enriched in basic residues. The segment covering 240 to 250 (DHPHGGGEGRH) has biased composition (basic and acidic residues). Residues 264 to 284 (KGLKTRDKRKSNKWIVKDRRK) show a composition bias toward basic residues.

The protein belongs to the universal ribosomal protein uL2 family. In terms of assembly, part of the 50S ribosomal subunit. Forms a bridge to the 30S subunit in the 70S ribosome.

In terms of biological role, one of the primary rRNA binding proteins. Required for association of the 30S and 50S subunits to form the 70S ribosome, for tRNA binding and peptide bond formation. It has been suggested to have peptidyltransferase activity; this is somewhat controversial. Makes several contacts with the 16S rRNA in the 70S ribosome. This Chlamydia muridarum (strain MoPn / Nigg) protein is Large ribosomal subunit protein uL2.